A 419-amino-acid polypeptide reads, in one-letter code: Tetraspanning orphan receptor (419 aa).

Residues 1 to 28 (MPRAPALLTNDARHQFTCCLCLHVRTGT) are Cytoplasmic-facing. The helical transmembrane segment at 29-49 (IIFGITQIIIQLVFISFLFLM) threads the bilayer. Residues 50-165 (TFNPRLIPED…EVKIKHFSPY (116 aa)) lie on the Extracellular side of the membrane. Residues 166-186 (IAVCVTTFSLAFCCFMVHGAI) traverse the membrane as a helical segment. Over 187 to 193 (TKQPTHL) the chain is Cytoplasmic. A helical transmembrane segment spans residues 194–214 (LPFFFIQVFDLIICLIHILGF). Residues 215–240 (MSSTSDLRLMIHTKTGPIYIKSTGFT) lie on the Extracellular side of the membrane. Residues 241 to 261 (FIILSISCMMLAFKAYCLGMV) traverse the membrane as a helical segment. At 262-419 (WDCYKYLMLN…SAPSNAHSSC (158 aa)) the chain is on the cytoplasmic side. Residues 303–316 (NNSIGNSGSPNEPN) show a composition bias toward low complexity. The interval 303 to 328 (NNSIGNSGSPNEPNTRPRPEPITYDP) is disordered.

Interacts (via N-terminal extracellular domain) with human C2a. Post-translationally, phosphorylated on tyrosine residues.

The protein localises to the cell membrane. Functionally, cell surface receptor that binds to human complement C2a protein. This results in inhibition of the classical and lectin pathways of complement activation, probably due to interference with binding of C2a to C4b and interference with cleavage by C1 or MASP2 such that C3 convertase cannot be formed. This infers resistance to complement-mediated cell lysis, allowing parasite survival and infection. In Schistosoma mansoni (Blood fluke), this protein is Tetraspanning orphan receptor.